Here is a 25-residue protein sequence, read N- to C-terminus: YDASLKPNLQIPQKNIPNNDAVNIK.

Residues Tyr-1–Lys-25 form a disordered region. Over residues Gln-10–Lys-25 the composition is skewed to polar residues.

It carries out the reaction Endohydrolysis of (1-&gt;4)-beta-D-glucosidic linkages in cellulose, lichenin and cereal beta-D-glucans.. Functionally, this enzyme hydrolyzes cellotetraose, cellopentaose, and cellohexaose to cellobiose and cellotriose but does not hydrolyze cellobiose or cellotriose. In Ruminiclostridium josui (Clostridium josui), this protein is Endoglucanase 1.